A 198-amino-acid polypeptide reads, in one-letter code: Large ribosomal subunit protein bL25 (198 aa).

It belongs to the bacterial ribosomal protein bL25 family. CTC subfamily. In terms of assembly, part of the 50S ribosomal subunit; part of the 5S rRNA/L5/L18/L25 subcomplex. Contacts the 5S rRNA. Binds to the 5S rRNA independently of L5 and L18.

In terms of biological role, this is one of the proteins that binds to the 5S RNA in the ribosome where it forms part of the central protuberance. The protein is Large ribosomal subunit protein bL25 of Azotobacter vinelandii (strain DJ / ATCC BAA-1303).